Here is a 128-residue protein sequence, read N- to C-terminus: Otoraplin (128 aa).

The signal sequence occupies residues 1–18 (MARILILLLGGLVVLCAG). Intrachain disulfides connect Cys32-Cys37 and Cys55-Cys127. The region spanning 39-110 (YTISLARAQE…PSNLVKEQRV (72 aa)) is the SH3 domain.

It belongs to the MIA/OTOR family. In terms of tissue distribution, highly expressed in cochlea.

The protein resides in the secreted. The protein is Otoraplin (Otor) of Mus musculus (Mouse).